The following is a 158-amino-acid chain: MQGRLSAWLVKHGLIHRSLGFDYQGIETLQIKPEDWHSIAVILYVYGYNYLRSQCAYDVAPGGLLASVYHLTRIEYGVDQPEEVCIKVFAPRRNPRIPSVFWVWKSVDFQERESYDMLGIFYATHPRLKRILMPESWVGWPLRKDYIAPNFYEIQDAH.

The protein belongs to the complex I 30 kDa subunit family. As to quaternary structure, NDH is composed of at least 16 different subunits, 5 of which are encoded in the nucleus.

The protein resides in the plastid. The protein localises to the chloroplast thylakoid membrane. The catalysed reaction is a plastoquinone + NADH + (n+1) H(+)(in) = a plastoquinol + NAD(+) + n H(+)(out). The enzyme catalyses a plastoquinone + NADPH + (n+1) H(+)(in) = a plastoquinol + NADP(+) + n H(+)(out). In terms of biological role, NDH shuttles electrons from NAD(P)H:plastoquinone, via FMN and iron-sulfur (Fe-S) centers, to quinones in the photosynthetic chain and possibly in a chloroplast respiratory chain. The immediate electron acceptor for the enzyme in this species is believed to be plastoquinone. Couples the redox reaction to proton translocation, and thus conserves the redox energy in a proton gradient. The polypeptide is NAD(P)H-quinone oxidoreductase subunit J, chloroplastic (Panax ginseng (Korean ginseng)).